Here is a 422-residue protein sequence, read N- to C-terminus: Tyrosine--tRNA ligase (422 aa).

Y37 provides a ligand contact to L-tyrosine. The short motif at 42–51 (PTEESLHIGH) is the 'HIGH' region element. Residues Y175 and Q179 each coordinate L-tyrosine. The short motif at 235–239 (KFGKT) is the 'KMSKS' region element. An ATP-binding site is contributed by K238. Residues 357 to 414 (KDLQEALVLTSLAQSRTQAKNMIISNSISINTEKIRKNHIFHEKDKLFGKFTLLSRGK) enclose the S4 RNA-binding domain.

Belongs to the class-I aminoacyl-tRNA synthetase family. TyrS type 1 subfamily. Homodimer.

It localises to the cytoplasm. The catalysed reaction is tRNA(Tyr) + L-tyrosine + ATP = L-tyrosyl-tRNA(Tyr) + AMP + diphosphate + H(+). Catalyzes the attachment of tyrosine to tRNA(Tyr) in a two-step reaction: tyrosine is first activated by ATP to form Tyr-AMP and then transferred to the acceptor end of tRNA(Tyr). This chain is Tyrosine--tRNA ligase, found in Buchnera aphidicola subsp. Acyrthosiphon pisum (strain APS) (Acyrthosiphon pisum symbiotic bacterium).